Consider the following 525-residue polypeptide: Histidine-rich glycoprotein (525 aa).

The signal sequence occupies residues 1-18 (MKALIAALLLITLQYSCA). 2 consecutive Cystatin domains span residues 19 to 136 (VSPT…SALA) and 137 to 254 (NTKD…NING). 5 disulfides stabilise this stretch: Cys24-Cys504, Cys78-Cys89, Cys105-Cys126, Cys203-Cys417, and Cys218-Cys241. An interaction with ATP5F1A region spans residues 41 to 84 (RRRDGYLFQLLRIADAHLDRVENTTVYYLVLDVQESDCSVLSRK). A glycan (N-linked (GlcNAc...) asparagine) is linked at Asn63. An N-linked (GlcNAc...) asparagine glycan is attached at Asn125. Residues 252-407 (INGVPPHLGH…GHHPHGHHPH (156 aa)) are disordered. The span at 284–293 (RDHHHPHKPH) shows a compositional bias: basic residues. Pro residues predominate over residues 310–320 (PPLPQGPPPLL). Residues 323-348 (SCSSCQHATFGTNGAQRHSHNNNSSD) show a composition bias toward polar residues. Asn344 and Asn345 each carry an N-linked (GlcNAc...) asparagine glycan. The necessary for endothelial cell focal adhesions and anti-angiogenic activities stretch occupies residues 348–382 (DLHPHKHHSHEQHPHGHHPHAHHPHEHDTHRQHPH). Composition is skewed to basic residues over residues 351–371 (PHKH…AHHP) and 379–407 (QHPH…HHPH).

In terms of assembly, interacts (via the HRR domain) with TPM1; the interaction appears to contribute to the antiangiogenic properties of the HRR domain. Interacts with THBS2; the interaction blocks the antiangiogenic effect of THBS2 with CD36. Interacts with THBS1 (via the TSP type I repeats); the interaction blocks the antiangiogenic effect of THBS1 with CD3. Interacts with PLG (via its Kringle domains); the interaction tethers PLG to the cell surface and enhances its activation. Interacts with HPSE; the interaction is enhanced at acidic pH, partially inhibits binding of HPSE to cell surface receptors and modulates its enzymatic activity. Interacts (via the HRR domain) with TMP1; the interaction partially mediates the antiangiogenic properties of HRG. Interacts with kappa and lambda light chains of IgG molecules. Interacts with ATP5F1A; the interaction occurs on the surface of T-cells and alters their cell morphology in concert with CONA. Binds IgG molecules containing kappa and lambda light chains and inhibits the formation of insoluble immunoglobulin complexes. Interacts with F12; the interaction, which is enhanced in the presence of zinc ions and inhibited by heparin-binding to HRG, inhibits factor XII autoactivation and contact-initiated coagulation. It depends on Zn(2+) as a cofactor. In terms of processing, proteolytic cleavage produces several HRG fragments which are mostly disulfide-linked and, therefore, not released. Cleavage by plasmin is inhibited in the presence of heparin, zinc ions or in an acidic environment. Cleavage reduces binding of HRG to heparan sulfate, but enhances the ability of HRG to bind and tether plasminogen to the cell surface. On platelet activation, releases a 33 kDa antiangiogenic peptide which encompasses the HRR. Also cleaved in the C-terminal by plasmin. N-glycosylated. Expressed in macrophages and in malignant cells. Expressed by the liver and secreted in plasma (at protein level).

It localises to the secreted. In terms of biological role, plasma glycoprotein that binds a number of ligands such as heme, heparin, heparan sulfate, thrombospondin, plasminogen, and divalent metal ions. Binds heparin and heparin/glycosaminoglycans in a zinc-dependent manner. Binds heparan sulfate on the surface of liver, lung, kidney and heart endothelial cells. Binds to N-sulfated polysaccharide chains on the surface of liver endothelial cells. Inhibits rosette formation. Acts as an adapter protein and is implicated in regulating many processes such as immune complex and pathogen clearance, cell chemotaxis, cell adhesion, angiogenesis, coagulation and fibrinolysis. Mediates clearance of necrotic cells through enhancing the phagocytosis of necrotic cells in a heparan sulfate-dependent pathway. This process can be regulated by the presence of certain HRG ligands such as heparin and zinc ions. Binds to IgG subclasses of immunoglobins containing kappa and lambda light chains with different affinities regulating their clearance and inhibiting the formation of insoluble immune complexes. Tethers plasminogen to the cell surface. Binds T-cells and alters the cell morphology. Modulates angiogenesis by blocking the CD6-mediated antiangiongenic effect of thrombospondins, THBS1 and THBS2. Acts as a regulator of the vascular endothelial growth factor (VEGF) signaling pathway; inhibits endothelial cell motility by reducing VEGF-induced complex formation between PXN/paxillin and ILK/integrin-linked protein kinase and by promoting inhibition of VEGF-induced tyrosine phosphorylation of focal adhesion kinases and alpha-actinins in endothelial cells. Also plays a role in the regulation of tumor angiogenesis and tumor immune surveillance. Normalizes tumor vessels and promotes antitumor immunity by polarizing tumor-associated macrophages, leading to decreased tumor growth and metastasis. The polypeptide is Histidine-rich glycoprotein (HRG) (Homo sapiens (Human)).